The chain runs to 254 residues: 3-deoxy-manno-octulosonate cytidylyltransferase (254 aa).

This sequence belongs to the KdsB family.

It localises to the cytoplasm. The enzyme catalyses 3-deoxy-alpha-D-manno-oct-2-ulosonate + CTP = CMP-3-deoxy-beta-D-manno-octulosonate + diphosphate. It participates in nucleotide-sugar biosynthesis; CMP-3-deoxy-D-manno-octulosonate biosynthesis; CMP-3-deoxy-D-manno-octulosonate from 3-deoxy-D-manno-octulosonate and CTP: step 1/1. It functions in the pathway bacterial outer membrane biogenesis; lipopolysaccharide biosynthesis. In terms of biological role, activates KDO (a required 8-carbon sugar) for incorporation into bacterial lipopolysaccharide in Gram-negative bacteria. The protein is 3-deoxy-manno-octulosonate cytidylyltransferase of Tolumonas auensis (strain DSM 9187 / NBRC 110442 / TA 4).